The chain runs to 180 residues: Secreted RxLR effector protein 19 (180 aa).

The N-terminal stretch at Met-1–Ser-19 is a signal peptide. Positions Phe-25–Pro-171 constitute a Jacalin-type lectin domain. Residues Arg-52 to Asn-77 carry the RxLR-dEER motif.

The protein belongs to the RxLR effector family.

The protein resides in the secreted. It is found in the host cytoplasm. It localises to the host nucleus. Functionally, effector that partially suppresses the tobacco programmed cell death induced by cell death-inducing proteins. The sequence is that of Secreted RxLR effector protein 19 from Plasmopara viticola (Downy mildew of grapevine).